Reading from the N-terminus, the 100-residue chain is Large ribosomal subunit protein uL23 (100 aa).

It belongs to the universal ribosomal protein uL23 family. As to quaternary structure, part of the 50S ribosomal subunit. Contacts protein L29, and trigger factor when it is bound to the ribosome.

Its function is as follows. One of the early assembly proteins it binds 23S rRNA. One of the proteins that surrounds the polypeptide exit tunnel on the outside of the ribosome. Forms the main docking site for trigger factor binding to the ribosome. This is Large ribosomal subunit protein uL23 from Prochlorococcus marinus (strain MIT 9312).